Here is a 431-residue protein sequence, read N- to C-terminus: Adenylosuccinate synthetase (431 aa).

GTP contacts are provided by residues 13–19 (GDEGKGK) and 41–43 (GHT). Catalysis depends on D14, which acts as the Proton acceptor. Mg(2+) contacts are provided by D14 and G41. IMP contacts are provided by residues 14–17 (DEGK), 39–42 (NAGH), T130, R144, Q225, T240, and R304. The active-site Proton donor is the H42. 300 to 306 (ATTGRKR) contributes to the substrate binding site. GTP is bound by residues R306, 332–334 (KLD), and 415–417 (STG).

The protein belongs to the adenylosuccinate synthetase family. In terms of assembly, homodimer. Mg(2+) serves as cofactor.

Its subcellular location is the cytoplasm. The catalysed reaction is IMP + L-aspartate + GTP = N(6)-(1,2-dicarboxyethyl)-AMP + GDP + phosphate + 2 H(+). Its pathway is purine metabolism; AMP biosynthesis via de novo pathway; AMP from IMP: step 1/2. Plays an important role in the de novo pathway of purine nucleotide biosynthesis. Catalyzes the first committed step in the biosynthesis of AMP from IMP. The protein is Adenylosuccinate synthetase of Shewanella piezotolerans (strain WP3 / JCM 13877).